A 1724-amino-acid polypeptide reads, in one-letter code: Protein CHROMATIN REMODELING 5 (1724 aa).

2 disordered regions span residues 24–88 and 104–415; these read QNAA…QSST and DCQP…DDIE. Positions 25–34 are enriched in polar residues; the sequence is NAATFQSSPL. A compositionally biased stretch (basic and acidic residues) spans 126 to 144; the sequence is EAYHSEDNHSNDRSEKLDS. Residues 138–164 adopt a coiled-coil conformation; that stretch reads RSEKLDSENENDNENEEEDNEMNKHQS. 4 stretches are compositionally biased toward acidic residues: residues 145–157, 170–186, 239–264, and 278–297; these read ENEN…EEDN, PADE…DEDN, ADMD…DAAD, and VSDE…YEDD. The span at 301–313 shows a compositional bias: basic residues; sequence KKPKVRQQSKGFR. The Nuclear localization signal 1 motif lies at 320-327; it reads ERKSFHVS. A compositionally biased stretch (acidic residues) spans 337 to 350; it reads QDDDSEEDSENDND. Polar residues predominate over residues 362 to 376; sequence TLRQNNGRSTNTIGQ. Over residues 403–412 the composition is skewed to basic and acidic residues; that stretch reads DGKNRKNQKD. A Chromo 1 domain is found at 420 to 499; that stretch reads DVIEKVLWHQ…FKKVLNYTKK (80 aa). Residues 505 to 525 adopt a coiled-coil conformation; the sequence is RYRTALSREEIEVNDVSKEMD. In terms of domain architecture, Chromo 2 spans 533–597; the sequence is SQVERIIADR…REVSIAVQGK (65 aa). The region spanning 637-809 is the Helicase ATP-binding domain; the sequence is VNSWLNDTNV…WALLHFLDPG (173 aa). Residue 650 to 657 participates in ATP binding; sequence DEMGLGKT. A DEAH box motif is present at residues 760 to 763; it reads DEAH. The 152-residue stretch at 943 to 1094 folds into the Helicase C-terminal domain; the sequence is ILDKLLVRLR…HLVIQKLNAE (152 aa). Residues 1126-1163 adopt a coiled-coil conformation; sequence KEDKNDEESKKRLLSMDIDEILERAEQVEEKHTDETEH. A disordered region spans residues 1199–1245; sequence ALAPRAARNTKSYVDPSHPDRTSKRKKKGSEPPEHTERSQKRRKTEY. Short sequence motifs (nuclear localization signal) lie at residues 1224–1231 and 1348–1355; these read KKKGSEPP and LKRVQGLQ. Residues 1227 to 1237 show a composition bias toward basic and acidic residues; that stretch reads GSEPPEHTERS. Disordered regions lie at residues 1480–1524 and 1654–1724; these read QFKA…EMSD and KFKT…FPPR. Residues 1504–1520 show a composition bias toward basic and acidic residues; sequence DGPRKTQKAEPLVKEEG. A compositionally biased stretch (polar residues) spans 1658-1667; that stretch reads AGNSQGSQQV. Residues 1669–1691 are compositionally biased toward basic and acidic residues; sequence KGIDTAKFEAWKRRRRTENDVQT. Over residues 1692 to 1702 the composition is skewed to polar residues; that stretch reads ERPTITNSNSL.

It belongs to the SNF2/RAD54 helicase family.

Its subcellular location is the nucleus. Its function is as follows. DNA-binding helicase that specifically binds to the promoter of target genes, leading to chromatin remodeling, possibly by promoting deposition of histone H3.3. Probable chromatin remodeling factor. This Arabidopsis thaliana (Mouse-ear cress) protein is Protein CHROMATIN REMODELING 5.